The primary structure comprises 469 residues: Zinc transporter SLC39A7 (469 aa).

The helical transmembrane segment at 10–30 (WVAVGLLTWATLGLLVAGLGG) threads the bilayer. Composition is skewed to basic and acidic residues over residues 42-56 (FHGHSHRHSHEDFHH) and 66-114 (HTHE…EHSH). The interval 42 to 121 (FHGHSHRHSH…HSHGGYGESG (80 aa)) is disordered. H66 carries the post-translational modification Pros-methylhistidine. The next 3 helical transmembrane spans lie at 138-158 (ALGATVLISAAPFFVLFLIPV), 169-189 (LQILLSFASGGLLGDAFLHLI), and 214-234 (GPILSVGLWVLSGIVAFLVVE). A compositionally biased stretch (basic residues) spans 242–263 (GGHGHSHGHGHAHSHTRGSHGH). Residues 242-310 (GGHGHSHGHG…VRPQNAEEEK (69 aa)) are disordered. A compositionally biased stretch (basic and acidic residues) spans 264 to 285 (GRQERSTKEKQSSEEEEKETRG). Phosphoserine; by CK2 is present on residues S275 and S276. 2 helical membrane passes run 381–401 (MRLQLLTAVGALAGTACALLT) and 417–436 (GWVLPFTAGGFIYVATVSVL).

This sequence belongs to the ZIP transporter (TC 2.A.5) family. KE4/Catsup subfamily. As to quaternary structure, homodimer. Post-translationally, rapidly phosphorylated by CK2 following Zn(2+) treatment. This phosphorylation is required for efficient cytosolic Zn(2+) release. Methylation at some His residue by METTL9 leads to reduced zinc-binding. As to expression, widely expressed.

It localises to the endoplasmic reticulum membrane. Its subcellular location is the golgi apparatus. The protein localises to the cis-Golgi network membrane. It catalyses the reaction Zn(2+)(in) = Zn(2+)(out). Phosphorylation activates zinc transport activity. Transports Zn(2+) from the endoplasmic reticulum (ER)/Golgi apparatus to the cytosol, playing an essential role in the regulation of cytosolic zinc levels. Acts as a gatekeeper of zinc release from intracellular stores, requiring post-translational activation by phosphorylation, resulting in activation of multiple downstream pathways leading to cell growth and proliferation. Has an essential role in B cell development and is required for proper B cell receptor signaling. Plays an important role in maintaining intestinal epithelial homeostasis and skin dermis development by regulating ER function. Controls cell signaling pathways involved in glucose metabolism in skeletal muscle. Has a protective role against ER stress in different biological contexts. Mediates Zn(2+)-induced ferroptosis. In Homo sapiens (Human), this protein is Zinc transporter SLC39A7 (SLC39A7).